Consider the following 349-residue polypeptide: MTKAPEGRRMLRVEARNSQTPIESKPRWIRTAVKTGPEYQDMKKKVSGASLHTVCQEAGCPNIHECWESREATFLIGGANCSRRCDFCQINSAKPEPLDRDEPRRVAESVREMQLNYSTITGVTRDDLEDEGAWLYAEVVRKIHELNPHTGVENLTPDFSGKPDLLQEVFEARPEVFAHNLETVPRIFKRIRPAFRYERSLDVIRQARDFGLVTKSNLILGMGETVDEIRDALVDLHSAGCDIITITQYLRPGPMYHPIDRWVKPEEFIDHADFARELGFGAVMSGPLVRSSYRAGKLYAEALAARGESLPENLAHLATTADGSTAQEANTLLEKYGPSQDTPVVSSKA.

[4Fe-4S] cluster contacts are provided by Cys-55, Cys-60, Cys-66, Cys-81, Cys-85, Cys-88, and Ser-292. The region spanning 67–281 is the Radical SAM core domain; it reads WESREATFLI…ADFARELGFG (215 aa).

It belongs to the radical SAM superfamily. Lipoyl synthase family. Requires [4Fe-4S] cluster as cofactor.

The protein resides in the cytoplasm. It catalyses the reaction [[Fe-S] cluster scaffold protein carrying a second [4Fe-4S](2+) cluster] + N(6)-octanoyl-L-lysyl-[protein] + 2 oxidized [2Fe-2S]-[ferredoxin] + 2 S-adenosyl-L-methionine + 4 H(+) = [[Fe-S] cluster scaffold protein] + N(6)-[(R)-dihydrolipoyl]-L-lysyl-[protein] + 4 Fe(3+) + 2 hydrogen sulfide + 2 5'-deoxyadenosine + 2 L-methionine + 2 reduced [2Fe-2S]-[ferredoxin]. It functions in the pathway protein modification; protein lipoylation via endogenous pathway; protein N(6)-(lipoyl)lysine from octanoyl-[acyl-carrier-protein]: step 2/2. Functionally, catalyzes the radical-mediated insertion of two sulfur atoms into the C-6 and C-8 positions of the octanoyl moiety bound to the lipoyl domains of lipoate-dependent enzymes, thereby converting the octanoylated domains into lipoylated derivatives. In Corynebacterium diphtheriae (strain ATCC 700971 / NCTC 13129 / Biotype gravis), this protein is Lipoyl synthase.